The sequence spans 343 residues: L-threonine 3-dehydrogenase (343 aa).

Residue C40 coordinates Zn(2+). Catalysis depends on charge relay system residues T42 and H45. Zn(2+) contacts are provided by H65, E66, C95, C98, C101, and C109. Residues I177, D197, R202, 264–266 (LGI), and 288–289 (IY) contribute to the NAD(+) site.

It belongs to the zinc-containing alcohol dehydrogenase family. As to quaternary structure, homotetramer. Requires Zn(2+) as cofactor.

The protein localises to the cytoplasm. The catalysed reaction is L-threonine + NAD(+) = (2S)-2-amino-3-oxobutanoate + NADH + H(+). The protein operates within amino-acid degradation; L-threonine degradation via oxydo-reductase pathway; glycine from L-threonine: step 1/2. In terms of biological role, catalyzes the NAD(+)-dependent oxidation of L-threonine to 2-amino-3-ketobutyrate. The chain is L-threonine 3-dehydrogenase from Vibrio vulnificus (strain YJ016).